Reading from the N-terminus, the 288-residue chain is ATP phosphoribosyltransferase (288 aa).

Belongs to the ATP phosphoribosyltransferase family. Long subfamily. Mg(2+) serves as cofactor.

The protein localises to the cytoplasm. It carries out the reaction 1-(5-phospho-beta-D-ribosyl)-ATP + diphosphate = 5-phospho-alpha-D-ribose 1-diphosphate + ATP. Its pathway is amino-acid biosynthesis; L-histidine biosynthesis; L-histidine from 5-phospho-alpha-D-ribose 1-diphosphate: step 1/9. With respect to regulation, feedback inhibited by histidine. Its function is as follows. Catalyzes the condensation of ATP and 5-phosphoribose 1-diphosphate to form N'-(5'-phosphoribosyl)-ATP (PR-ATP). Has a crucial role in the pathway because the rate of histidine biosynthesis seems to be controlled primarily by regulation of HisG enzymatic activity. The chain is ATP phosphoribosyltransferase from Methanococcus maripaludis (strain DSM 14266 / JCM 13030 / NBRC 101832 / S2 / LL).